The sequence spans 345 residues: Isocitrate/homoisocitrate dehydrogenase (345 aa).

T69–T71 contributes to the NADH binding site. Positions 86, 96, 111, 118, 163, and 165 each coordinate (2R,3S)-homoisocitrate. N165 is an NADH binding site. Mg(2+) is bound by residues D194, D218, and D222. NADH-binding positions include G251 to D255 and N263.

It belongs to the isocitrate and isopropylmalate dehydrogenases family. The cofactor is Mn(2+). Mg(2+) serves as cofactor.

The catalysed reaction is D-threo-isocitrate + NAD(+) = 2-oxoglutarate + CO2 + NADH. The enzyme catalyses (2R,3S)-homoisocitrate + NAD(+) = 2-oxoadipate + CO2 + NADH. The protein operates within amino-acid biosynthesis; L-lysine biosynthesis via AAA pathway; L-alpha-aminoadipate from 2-oxoglutarate: step 4/5. Catalyzes the NAD(+)-dependent oxidative decarboxylation of homoisocitrate to 2-oxoadipate (alpha-ketoadipate), and of isocitrate to 2-oxoglutarate, at near equal efficiency. May thus play a dual role in glutamate and lysine biosynthesis in vivo. Preferentially uses NAD over NADP. The protein is Isocitrate/homoisocitrate dehydrogenase of Pyrococcus horikoshii (strain ATCC 700860 / DSM 12428 / JCM 9974 / NBRC 100139 / OT-3).